The sequence spans 257 residues: Ribonuclease HII (257 aa).

The region spanning 72–257 is the RNase H type-2 domain; that stretch reads TYIAGIDEVG…FAPIKDMIQK (186 aa). A divalent metal cation contacts are provided by Asp-78, Glu-79, and Asp-170.

Belongs to the RNase HII family. The cofactor is Mn(2+). Requires Mg(2+) as cofactor.

The protein resides in the cytoplasm. The catalysed reaction is Endonucleolytic cleavage to 5'-phosphomonoester.. In terms of biological role, endonuclease that specifically degrades the RNA of RNA-DNA hybrids. The sequence is that of Ribonuclease HII from Bacillus cereus (strain AH820).